The following is a 507-amino-acid chain: Histidine ammonia-lyase (507 aa).

Residues 141 to 143 (ASG) constitute a cross-link (5-imidazolinone (Ala-Gly)). Serine 142 carries the 2,3-didehydroalanine (Ser) modification.

It belongs to the PAL/histidase family. Contains an active site 4-methylidene-imidazol-5-one (MIO), which is formed autocatalytically by cyclization and dehydration of residues Ala-Ser-Gly.

Its subcellular location is the cytoplasm. The catalysed reaction is L-histidine = trans-urocanate + NH4(+). The protein operates within amino-acid degradation; L-histidine degradation into L-glutamate; N-formimidoyl-L-glutamate from L-histidine: step 1/3. The sequence is that of Histidine ammonia-lyase from Natranaerobius thermophilus (strain ATCC BAA-1301 / DSM 18059 / JW/NM-WN-LF).